Reading from the N-terminus, the 477-residue chain is PTS system glucose-specific EIICB component (477 aa).

The region spanning 1-388 (MFKNVFSSLQ…FNLKTPGREE (388 aa)) is the PTS EIIC type-1 domain. Transmembrane regions (helical) follow at residues 20-40 (VSVL…FTLI), 51-71 (TGGS…ALGF), 76-96 (GVAA…LSAV), 112-132 (NFSD…AYMF), 152-172 (FVPI…SLIW), 250-270 (LSGG…AIWH), 280-300 (IGSI…TEPI), 304-324 (FILV…LSFP), and 354-374 (IFLF…IFYF). A PTS EIIB type-1 domain is found at 399–477 (IEIAPYIVEA…TAIDEYINNI (79 aa)). Cys-421 acts as the Phosphocysteine intermediate; for EIIB activity in catalysis. Cys-421 is subject to Phosphocysteine.

It is found in the cell inner membrane. It catalyses the reaction N(pros)-phospho-L-histidyl-[protein] + D-glucose(out) = D-glucose 6-phosphate(in) + L-histidyl-[protein]. The phosphoenolpyruvate-dependent sugar phosphotransferase system (sugar PTS), a major carbohydrate active transport system, catalyzes the phosphorylation of incoming sugar substrates concomitantly with their translocation across the cell membrane. The enzyme II complex composed of PtsG and Crr is involved in glucose transport. The chain is PTS system glucose-specific EIICB component (ptsG) from Buchnera aphidicola subsp. Schizaphis graminum (strain Sg).